A 440-amino-acid polypeptide reads, in one-letter code: 23S rRNA (uracil(1939)-C(5))-methyltransferase RlmD (440 aa).

The 59-residue stretch at 11-69 (STLDTKHQPVTIERLDHQGSGLAFLHKKPLFVDGALPGEEVLIQLTENKSKYARGQLIK) folds into the TRAM domain. 4 residues coordinate [4Fe-4S] cluster: Cys-82, Cys-88, Cys-91, and Cys-169. S-adenosyl-L-methionine contacts are provided by Gln-272, Phe-301, Asn-306, Glu-322, Asn-349, and Asp-370. Residue Cys-396 is the Nucleophile of the active site.

It belongs to the class I-like SAM-binding methyltransferase superfamily. RNA M5U methyltransferase family. RlmD subfamily.

The enzyme catalyses uridine(1939) in 23S rRNA + S-adenosyl-L-methionine = 5-methyluridine(1939) in 23S rRNA + S-adenosyl-L-homocysteine + H(+). Functionally, catalyzes the formation of 5-methyl-uridine at position 1939 (m5U1939) in 23S rRNA. The sequence is that of 23S rRNA (uracil(1939)-C(5))-methyltransferase RlmD from Vibrio cholerae serotype O1 (strain M66-2).